The primary structure comprises 358 residues: Pseudouridylate synthase RPUSD4, mitochondrial (358 aa).

The N-terminal 12 residues, 1 to 12 (MRHAREVTFARL), are a transit peptide targeting the mitochondrion.

The protein belongs to the pseudouridine synthase RluA family.

It localises to the mitochondrion matrix. It is found in the nucleus. The protein resides in the cytoplasm. It catalyses the reaction uridine in 5S rRNA = pseudouridine in 5S rRNA. The enzyme catalyses a uridine in tRNA = a pseudouridine in tRNA. It carries out the reaction a uridine in mRNA = a pseudouridine in mRNA. In terms of biological role, catalyzes uridine to pseudouridine isomerization (pseudouridylation) of different mitochondrial RNA substrates. Acts on position 1397 in 16S mitochondrial ribosomal RNA (16S mt-rRNA). This modification is required for the assembly of 16S mt-rRNA into a functional mitochondrial ribosome. Acts on position 39 in mitochondrial tRNA(Phe). Also catalyzes pseudouridylation of mRNAs in nucleus: acts as a regulator of pre-mRNA splicing by mediating pseudouridylation of pre-mRNAs at locations associated with alternatively spliced regions. Pseudouridylation of pre-mRNAs near splice sites directly regulates mRNA splicing and mRNA 3'-end processing. The chain is Pseudouridylate synthase RPUSD4, mitochondrial from Danio rerio (Zebrafish).